The following is a 127-amino-acid chain: MAYAIIEASGKQLWVEPGRFYDLDRLDADLDQSLTLDKVLLVQDEGAPQIGQPYVAGATVQVTVLSHPRGRKVTVYKMKPKKKTRKKQGHRQDLTRVLVESITVGGKVLTANAADLPKSEADIDAAG.

It belongs to the bacterial ribosomal protein bL21 family. Part of the 50S ribosomal subunit. Contacts protein L20.

This protein binds to 23S rRNA in the presence of protein L20. This Synechococcus elongatus (strain ATCC 33912 / PCC 7942 / FACHB-805) (Anacystis nidulans R2) protein is Large ribosomal subunit protein bL21.